A 1011-amino-acid polypeptide reads, in one-letter code: CRM-domain containing factor CFM2, chloroplastic (1011 aa).

The transit peptide at 1 to 45 (MLLPLFHQQPLILAKTFPDRIFPPFLVPNTLVSRRNVSRANSGIF) directs the protein to the chloroplast. The segment covering 77–90 (HDSPTRRITGEESG) has biased composition (basic and acidic residues). The segment at 77-96 (HDSPTRRITGEESGKNSPGE) is disordered. CRM domains follow at residues 164–260 (LTLP…YFVS), 376–473 (PKLT…AVSS), and 577–677 (EGIT…QCLR). Disordered stretches follow at residues 721-810 (DSAT…GNSL) and 841-872 (LNANRKLPGSSTGSGSQISALRERKSENDGLV). Over residues 722–736 (SATNETWSDGESSNM) the composition is skewed to polar residues. A compositionally biased stretch (basic and acidic residues) spans 743 to 757 (ENQHTEPEKAREKIE). The segment covering 762–771 (SDLSVPSSGE) has biased composition (polar residues). Acidic residues predominate over residues 772–782 (ENWEDDSEGEV). Over residues 849-859 (GSSTGSGSQIS) the composition is skewed to polar residues. Positions 873–972 (TDLSNRERLI…WGAEEEMKSF (100 aa)) constitute a CRM 4 domain.

As to quaternary structure, interacts with RNA. Part of large ribonucleo-protein particles that contain CAF1 and/or CAF2.

It localises to the plastid. The protein resides in the chloroplast stroma. Its function is as follows. Binds specific group II introns in chloroplasts and facilitates their splicing. Acts on both subgroup IIA and subgroup IIB introns. The substrates of the subgroup IIB also require the CRM domain proteins CAF1 or CAF2, with a simultaneous binding of CFM2 and CAF1 or CAF2. Can bind to and promote the splicing of the single group I intron in chloroplast tRNA transcript of trnL-UAA gene. In Arabidopsis thaliana (Mouse-ear cress), this protein is CRM-domain containing factor CFM2, chloroplastic.